The sequence spans 123 residues: MDNKTYEISSAEWEFMNIIWMKKYASANNIIEEIQMQKDWSPKTIRTLITRLYKKGFIDRKKDNKIFQYYSLVEESDIKYKTSKNFINKVYKGGFNSLVLNFVEKEDLSQDEIEELRNILNKK.

A DNA-binding region (H-T-H motif) is located at residues 7–71 (EISSAEWEFM…KDNKIFQYYS (65 aa)). The segment at 74–123 (EESDIKYKTSKNFINKVYKGGFNSLVLNFVEKEDLSQDEIEELRNILNKK) is important for dimerization.

It belongs to the BlaI transcriptional regulatory family. In terms of assembly, monomer and homodimer. Post-translationally, upon exposure to beta-lactams, proteolytic cleavage at a single site impairs dimerization and abolishes repressor activity.

The protein resides in the cytoplasm. Its function is as follows. Transcriptional repressor that constitutively blocks the transcription of the gene for the penicillin-binding protein MecA. Binds DNA as a dimer. In Staphylococcus aureus (strain Mu50 / ATCC 700699), this protein is Methicillin resistance regulatory protein MecI (mecI).